Here is a 250-residue protein sequence, read N- to C-terminus: tRNA (guanine-N(7)-)-methyltransferase (250 aa).

Residues E86, E111, D138, and D161 each coordinate S-adenosyl-L-methionine. D161 is an active-site residue. Substrate contacts are provided by residues K165, D197, and 229–232 (TEFE).

It belongs to the class I-like SAM-binding methyltransferase superfamily. TrmB family.

The catalysed reaction is guanosine(46) in tRNA + S-adenosyl-L-methionine = N(7)-methylguanosine(46) in tRNA + S-adenosyl-L-homocysteine. It participates in tRNA modification; N(7)-methylguanine-tRNA biosynthesis. In terms of biological role, catalyzes the formation of N(7)-methylguanine at position 46 (m7G46) in tRNA. This Treponema pallidum (strain Nichols) protein is tRNA (guanine-N(7)-)-methyltransferase.